We begin with the raw amino-acid sequence, 141 residues long: Large ribosomal subunit protein uL11 (141 aa).

It belongs to the universal ribosomal protein uL11 family. Part of the ribosomal stalk of the 50S ribosomal subunit. Interacts with L10 and the large rRNA to form the base of the stalk. L10 forms an elongated spine to which L12 dimers bind in a sequential fashion forming a multimeric L10(L12)X complex. Post-translationally, one or more lysine residues are methylated.

Functionally, forms part of the ribosomal stalk which helps the ribosome interact with GTP-bound translation factors. This chain is Large ribosomal subunit protein uL11, found in Acetivibrio thermocellus (strain ATCC 27405 / DSM 1237 / JCM 9322 / NBRC 103400 / NCIMB 10682 / NRRL B-4536 / VPI 7372) (Clostridium thermocellum).